The chain runs to 1163 residues: Protein phosphatase 1 regulatory subunit 26 (1163 aa).

Over residues 65 to 83 (HERLTQRGQRAERSRDTRL) the composition is skewed to basic and acidic residues. Disordered regions lie at residues 65-91 (HERLTQRGQRAERSRDTRLAPKPAVCK), 144-253 (RGGA…TSAR), 266-393 (RKPP…KKKL), 463-496 (APMEGSDRPPSRNPLFCPQPMPPRSEGDSSNIDS), 514-653 (VGSP…DEDL), 672-929 (RDPR…TATA), and 1073-1163 (TQPG…GLKL). Polar residues-rich tracts occupy residues 163–179 (HSSTLPIPCPSQLTPGS) and 189–201 (DQGSTSPASMSSE). Basic and acidic residues predominate over residues 208-236 (IRAEIEQFLNEKRQHENPKCDGFVDKKSD). The span at 273-297 (KMSTQQRNFQPKPTTEPETPVSTKL) shows a compositional bias: polar residues. Residues 315 to 324 (MPARRSKRIR) are compositionally biased toward basic residues. Residues 515–535 (GSPQPAQGPLSSPGPSGQPGI) show a composition bias toward low complexity. Basic and acidic residues-rich tracts occupy residues 566-581 (KIREGRESTQDADHIQ) and 634-645 (ATEKESSEDKSS). Basic residues predominate over residues 672 to 682 (RDPRASCKKVR). The segment covering 766 to 780 (TGASGHPPSASSPTS) has biased composition (low complexity). A compositionally biased stretch (acidic residues) spans 783-792 (SAVDSDDSIE). Basic and acidic residues-rich tracts occupy residues 793–808 (LEIRRFLAEKAKESIR) and 850–859 (EGRRGPERAR). Over residues 860 to 871 (TQATGLLSQSGK) the composition is skewed to polar residues. Over residues 901–910 (SSAKASPPSR) the composition is skewed to low complexity. Residues 1105-1131 (QQDRRNSASEDKVLDLRYRHRVDREPQ) are compositionally biased toward basic and acidic residues. Phosphoserine is present on S1111. Composition is skewed to polar residues over residues 1133 to 1146 (QETLGSDASEFSDT) and 1154 to 1163 (ATVSSKGLKL).

As to quaternary structure, interacts with UTP20 and PPP1CA.

The protein resides in the nucleus. Its subcellular location is the nucleolus. Its function is as follows. Inhibits phosphatase activity of protein phosphatase 1 (PP1) complexes. May positively regulate cell proliferation. This Mus musculus (Mouse) protein is Protein phosphatase 1 regulatory subunit 26 (Ppp1r26).